The sequence spans 627 residues: tRNA uridine 5-carboxymethylaminomethyl modification enzyme MnmG (627 aa).

FAD-binding positions include 16 to 21, valine 128, and serine 183; that span reads GAGHAG. 277-291 contributes to the NAD(+) binding site; that stretch reads GPRYCPSIEDKIVRF. Glutamine 374 serves as a coordination point for FAD.

It belongs to the MnmG family. In terms of assembly, homodimer. Heterotetramer of two MnmE and two MnmG subunits. FAD serves as cofactor.

The protein resides in the cytoplasm. NAD-binding protein involved in the addition of a carboxymethylaminomethyl (cmnm) group at the wobble position (U34) of certain tRNAs, forming tRNA-cmnm(5)s(2)U34. This Finegoldia magna (strain ATCC 29328 / DSM 20472 / WAL 2508) (Peptostreptococcus magnus) protein is tRNA uridine 5-carboxymethylaminomethyl modification enzyme MnmG.